Here is a 103-residue protein sequence, read N- to C-terminus: c-Myc-binding protein (103 aa).

The protein belongs to the AMY1 family. As to quaternary structure, binds via its C-terminal region to the N-terminal region of MYC. Associates with AKAP1/S-AKAP84. Interacts with MYCBPAP. Interacts with CFAP91.

It is found in the cytoplasm. The protein localises to the nucleus. May control the transcriptional activity of MYC. Stimulates the activation of E box-dependent transcription by MYC. This chain is c-Myc-binding protein (MYCBP), found in Pongo abelii (Sumatran orangutan).